A 165-amino-acid polypeptide reads, in one-letter code: uncharacterized protein (165 aa).

The N-terminal stretch at 1-17 (MIRGFFLILLFLLLAFF) is a signal peptide.

This is an uncharacterized protein from Aquifex aeolicus (strain VF5).